The following is a 479-amino-acid chain: Ribulose bisphosphate carboxylase large chain (479 aa).

A propeptide spanning residues 1 to 2 is cleaved from the precursor; the sequence is MS. Residue proline 3 is modified to N-acetylproline. Substrate contacts are provided by asparagine 123 and threonine 173. The active-site Proton acceptor is the lysine 175. Lysine 177 is a binding site for substrate. Lysine 201, aspartate 203, and glutamate 204 together coordinate Mg(2+). An N6-carboxylysine modification is found at lysine 201. The active-site Proton acceptor is histidine 294. The substrate site is built by arginine 295, histidine 327, and serine 379.

The protein belongs to the RuBisCO large chain family. Type I subfamily. Heterohexadecamer of 8 large chains and 8 small chains; disulfide-linked. The disulfide link is formed within the large subunit homodimers. Mg(2+) serves as cofactor. In terms of processing, the disulfide bond which can form in the large chain dimeric partners within the hexadecamer appears to be associated with oxidative stress and protein turnover.

The protein resides in the plastid. The protein localises to the chloroplast. It catalyses the reaction 2 (2R)-3-phosphoglycerate + 2 H(+) = D-ribulose 1,5-bisphosphate + CO2 + H2O. The enzyme catalyses D-ribulose 1,5-bisphosphate + O2 = 2-phosphoglycolate + (2R)-3-phosphoglycerate + 2 H(+). RuBisCO catalyzes two reactions: the carboxylation of D-ribulose 1,5-bisphosphate, the primary event in carbon dioxide fixation, as well as the oxidative fragmentation of the pentose substrate in the photorespiration process. Both reactions occur simultaneously and in competition at the same active site. This is Ribulose bisphosphate carboxylase large chain from Hordeum vulgare (Barley).